Reading from the N-terminus, the 542-residue chain is Chaperonin GroEL (542 aa).

Residues 29-32 (TLGP), 86-90 (DGTTT), glycine 413, 477-479 (NAA), and aspartate 493 contribute to the ATP site.

Belongs to the chaperonin (HSP60) family. In terms of assembly, forms a cylinder of 14 subunits composed of two heptameric rings stacked back-to-back. Interacts with the co-chaperonin GroES.

The protein localises to the cytoplasm. It carries out the reaction ATP + H2O + a folded polypeptide = ADP + phosphate + an unfolded polypeptide.. In terms of biological role, together with its co-chaperonin GroES, plays an essential role in assisting protein folding. The GroEL-GroES system forms a nano-cage that allows encapsulation of the non-native substrate proteins and provides a physical environment optimized to promote and accelerate protein folding. This Beutenbergia cavernae (strain ATCC BAA-8 / DSM 12333 / CCUG 43141 / JCM 11478 / NBRC 16432 / NCIMB 13614 / HKI 0122) protein is Chaperonin GroEL.